A 310-amino-acid polypeptide reads, in one-letter code: uncharacterized protein (310 aa).

Disordered stretches follow at residues 22 to 163 (LARQ…PVEH) and 178 to 209 (EAEA…VEGD). 2 stretches are compositionally biased toward basic and acidic residues: residues 56-66 (IIRDDHHHAGP) and 183-197 (TEVR…ERHA). Low complexity predominate over residues 198–209 (AAAAAGTDVEGD). 3 helical membrane-spanning segments follow: residues 231–251 (ALVV…FIAF), 257–277 (WNSI…VVSV), and 286–306 (IAST…PLAL).

It to M.leprae ML2433.

The protein resides in the cell membrane. This is an uncharacterized protein from Mycobacterium tuberculosis (strain CDC 1551 / Oshkosh).